We begin with the raw amino-acid sequence, 726 residues long: Catalase-peroxidase 1 (726 aa).

Positions 1-33 are disordered; the sequence is MSTSDDIHNTTATGKCPFHQGGHDQSAGAGTTT. Residues 105 to 226 constitute a cross-link (tryptophyl-tyrosyl-methioninium (Trp-Tyr) (with M-252)); sequence WHGAGTYRSI…LGATEMGLIY (122 aa). Catalysis depends on His-106, which acts as the Proton acceptor. The tryptophyl-tyrosyl-methioninium (Tyr-Met) (with W-105) cross-link spans 226–252; sequence YVNPEGPDHSGEPLSAAAAIRATFGNM. A heme b-binding site is contributed by His-267.

Belongs to the peroxidase family. Peroxidase/catalase subfamily. In terms of assembly, homodimer or homotetramer. Heme b serves as cofactor. In terms of processing, formation of the three residue Trp-Tyr-Met cross-link is important for the catalase, but not the peroxidase activity of the enzyme.

It catalyses the reaction H2O2 + AH2 = A + 2 H2O. The catalysed reaction is 2 H2O2 = O2 + 2 H2O. In terms of biological role, bifunctional enzyme with both catalase and broad-spectrum peroxidase activity. The protein is Catalase-peroxidase 1 of Escherichia coli O157:H7.